The sequence spans 89 residues: MSITAEKKQEVIQSNARAEGDTGSPEVQVAILTSRIQTLTEHFKSHHKDNHSRRGLLMMVNKRRSLLDYLKKKDVERYNALIQKLGLRK.

Residues 1–10 are compositionally biased toward basic and acidic residues; it reads MSITAEKKQE. The tract at residues 1-24 is disordered; the sequence is MSITAEKKQEVIQSNARAEGDTGS.

The protein belongs to the universal ribosomal protein uS15 family. Part of the 30S ribosomal subunit. Forms a bridge to the 50S subunit in the 70S ribosome, contacting the 23S rRNA.

Its function is as follows. One of the primary rRNA binding proteins, it binds directly to 16S rRNA where it helps nucleate assembly of the platform of the 30S subunit by binding and bridging several RNA helices of the 16S rRNA. Functionally, forms an intersubunit bridge (bridge B4) with the 23S rRNA of the 50S subunit in the ribosome. The polypeptide is Small ribosomal subunit protein uS15 (Novosphingobium aromaticivorans (strain ATCC 700278 / DSM 12444 / CCUG 56034 / CIP 105152 / NBRC 16084 / F199)).